We begin with the raw amino-acid sequence, 206 residues long: Small ribosomal subunit protein uS4 (206 aa).

The region spanning 96–156 (GRLDNVVYRM…EKAKQQARIK (61 aa)) is the S4 RNA-binding domain.

It belongs to the universal ribosomal protein uS4 family. Part of the 30S ribosomal subunit. Contacts protein S5. The interaction surface between S4 and S5 is involved in control of translational fidelity.

Its function is as follows. One of the primary rRNA binding proteins, it binds directly to 16S rRNA where it nucleates assembly of the body of the 30S subunit. In terms of biological role, with S5 and S12 plays an important role in translational accuracy. This chain is Small ribosomal subunit protein uS4, found in Vibrio campbellii (strain ATCC BAA-1116).